A 369-amino-acid chain; its full sequence is Putative protein FAM10A5 (369 aa).

Positions 38–98 (MGGKVPPATQ…IEPDTDAPQE (61 aa)) are disordered. Residues 49–73 (AKSEENTKEEKPDSKKVEEDLKADE) are compositionally biased toward basic and acidic residues. A compositionally biased stretch (acidic residues) spans 89-98 (IEPDTDAPQE). 3 TPR repeats span residues 114 to 147 (ANDKKVAAIEVLNDGELQKAIDLFTDAIKLNPRL), 149 to 181 (ILYAKRASVFVKLQKPNAAIQDCDRAIEINPDS), and 183 to 215 (QPYKWRGKAHRLLGHWEEAAHDLAFACKLDYDE). Over residues 256–272 (KAQEEQERAQREEEARR) the composition is skewed to basic and acidic residues. The tract at residues 256–300 (KAQEEQERAQREEEARRQSGAHYGPFPGGFPGGMPGNFPGGMPGM) is disordered. Positions 281–300 (FPGGFPGGMPGNFPGGMPGM) are enriched in gly residues. The STI1 domain occupies 319 to 358 (DPEALAAMQDPEVMVAFQDVAQNPANMSKYQSNPKVMNLI). Position 346 is a phosphoserine (S346). Residues K353 and K360 each carry the N6-acetyllysine modification.

Belongs to the FAM10 family.

The protein resides in the cytoplasm. The chain is Putative protein FAM10A5 (ST13P5) from Homo sapiens (Human).